Reading from the N-terminus, the 181-residue chain is NADH-quinone oxidoreductase subunit B (181 aa).

Cysteine 45, cysteine 46, cysteine 111, and cysteine 140 together coordinate [4Fe-4S] cluster.

It belongs to the complex I 20 kDa subunit family. As to quaternary structure, NDH-1 is composed of 14 different subunits. Subunits NuoB, C, D, E, F, and G constitute the peripheral sector of the complex. The cofactor is [4Fe-4S] cluster.

The protein resides in the cell inner membrane. The catalysed reaction is a quinone + NADH + 5 H(+)(in) = a quinol + NAD(+) + 4 H(+)(out). Its function is as follows. NDH-1 shuttles electrons from NADH, via FMN and iron-sulfur (Fe-S) centers, to quinones in the respiratory chain. The immediate electron acceptor for the enzyme in this species is believed to be a menaquinone. Couples the redox reaction to proton translocation (for every two electrons transferred, four hydrogen ions are translocated across the cytoplasmic membrane), and thus conserves the redox energy in a proton gradient. This chain is NADH-quinone oxidoreductase subunit B, found in Flavobacterium psychrophilum (strain ATCC 49511 / DSM 21280 / CIP 103535 / JIP02/86).